Consider the following 53-residue polypeptide: uncharacterized protein (53 aa).

The helical transmembrane segment at 26–46 threads the bilayer; it reads CYLLFCFLECFLNLFKKCGVF.

Belongs to the plectrovirus ORF11 family.

It localises to the host membrane. This is an uncharacterized protein from Spiroplasma virus SpV1-R8A2 B (SpV1).